Here is an 80-residue protein sequence, read N- to C-terminus: Conotoxin SIVB (80 aa).

The first 21 residues, 1–21 (MGMRMMFTVFLSVVLATTVVS), serve as a signal peptide directing secretion. Residues 22-38 (TPSDRASDGRNAAVHER) constitute a propeptide that is removed on maturation. Position 39 is a pyrrolidone carboxylic acid (Gln-39). Ser-45 carries O-linked (HexNAc...) serine glycosylation. 4-hydroxyproline occurs at positions 55, 60, 61, 69, 72, and 75. At Pro-75 the chain carries Proline amide. A propeptide spanning residues 76–80 (GRRND) is cleaved from the precursor.

The protein belongs to the conotoxin A superfamily. Post-translationally, contains 3 disulfide bonds. In terms of processing, O-linked glycan consists of Hex3-HexNAc2 pentasaccharide. Expressed by the venom duct.

It localises to the secreted. In terms of biological role, neurotoxin with probable activity on sodium channel. Induces intense repetitive firing of the frog neuromuscular junction, leading to a tetanic contracture in muscle fiber (spastic paralysis). In vivo, shows the same effect as the whole venom when injected on fish prey. The protein is Conotoxin SIVB of Conus striatus (Striated cone).